A 396-amino-acid chain; its full sequence is Phosphoglycerate kinase (396 aa).

Residues 21–23 (DFN), arginine 36, 59–62 (HLGR), arginine 118, and arginine 151 each bind substrate. Residues lysine 201, glycine 292, glutamate 323, and 349–352 (GGDS) contribute to the ATP site.

The protein belongs to the phosphoglycerate kinase family. As to quaternary structure, monomer.

It is found in the cytoplasm. It catalyses the reaction (2R)-3-phosphoglycerate + ATP = (2R)-3-phospho-glyceroyl phosphate + ADP. The protein operates within carbohydrate degradation; glycolysis; pyruvate from D-glyceraldehyde 3-phosphate: step 2/5. The chain is Phosphoglycerate kinase from Leptospira interrogans serogroup Icterohaemorrhagiae serovar Lai (strain 56601).